Reading from the N-terminus, the 156-residue chain is Baculoviral IAP repeat-containing protein 5.2 (156 aa).

A BIR repeat occupies 30–100 (RLSTFANWPF…KHSPSCLFIA (71 aa)). At Thr-46 the chain carries Phosphothreonine; by CDK1. Zn(2+)-binding residues include Cys-69, Cys-72, His-89, and Cys-96.

Belongs to the IAP family. Component of the CPC at least composed of survivin/birc5, incenp, cdca8/borealin and/or cdca9/dasra-A, and aurkb/aurora-B. Interacts directly with incenp (via N-terminus). Interacts with rxra; the interaction is stronger in the absence of 9-cis retinoic acids. Ubiquitination is required for centrosome-targeting.

The protein resides in the cytoplasm. The protein localises to the nucleus. Its subcellular location is the chromosome. It is found in the centromere. It localises to the cytoskeleton. The protein resides in the spindle. Functionally, component of the chromosomal passenger complex (CPC), a complex that acts as a key regulator of mitosis. The CPC complex has essential functions at the centromere in ensuring correct chromosome alignment and segregation and is required for chromatin-induced microtubule stabilization and spindle assembly. Does not appear to exhibit anti-apoptotic activity. Plays a role in increasing blood vessel size during development. The protein is Baculoviral IAP repeat-containing protein 5.2 (birc5.2) of Xenopus tropicalis (Western clawed frog).